The chain runs to 200 residues: 3-isopropylmalate dehydratase small subunit (200 aa).

It belongs to the LeuD family. LeuD type 1 subfamily. Heterodimer of LeuC and LeuD.

It catalyses the reaction (2R,3S)-3-isopropylmalate = (2S)-2-isopropylmalate. It participates in amino-acid biosynthesis; L-leucine biosynthesis; L-leucine from 3-methyl-2-oxobutanoate: step 2/4. In terms of biological role, catalyzes the isomerization between 2-isopropylmalate and 3-isopropylmalate, via the formation of 2-isopropylmaleate. The polypeptide is 3-isopropylmalate dehydratase small subunit (Aliivibrio fischeri (strain ATCC 700601 / ES114) (Vibrio fischeri)).